Consider the following 503-residue polypeptide: Maturase K (503 aa).

It belongs to the intron maturase 2 family. MatK subfamily.

The protein resides in the plastid. The protein localises to the chloroplast. In terms of biological role, usually encoded in the trnK tRNA gene intron. Probably assists in splicing its own and other chloroplast group II introns. This Cercocarpus betuloides (Mountain mahogany) protein is Maturase K.